A 392-amino-acid polypeptide reads, in one-letter code: HORMA domain-containing protein 1 (392 aa).

Residues 25 to 227 (QQSLMFVKRL…TPFHTFRLKV (203 aa)) enclose the HORMA domain. Disordered regions lie at residues 271 to 292 (IKTK…EPNL) and 371 to 392 (LESS…NEHT). Residue Ser374 is modified to Phosphoserine. The Nuclear localization signal signature appears at 381 to 384 (KRRR).

As to quaternary structure, interacts with HORMAD2. Interacts with IHO1. Phosphorylated at Ser-375 in a SPO11-dependent manner.

The protein localises to the nucleus. It is found in the chromosome. In terms of biological role, plays a key role in meiotic progression. Regulates 3 different functions during meiosis: ensures that sufficient numbers of processed DNA double-strand breaks (DSBs) are available for successful homology search by increasing the steady-state numbers of single-stranded DSB ends. Promotes synaptonemal-complex formation independently of its role in homology search. Plays a key role in the male mid-pachytene checkpoint and the female meiotic prophase checkpoint: required for efficient build-up of ATR activity on unsynapsed chromosome regions, a process believed to form the basis of meiotic silencing of unsynapsed chromatin (MSUC) and meiotic prophase quality control in both sexes. This is HORMA domain-containing protein 1 (Hormad1) from Rattus norvegicus (Rat).